A 272-amino-acid chain; its full sequence is Shikimate dehydrogenase (NADP(+)) (272 aa).

Shikimate contacts are provided by residues serine 14 to serine 16 and threonine 61. Lysine 65 acts as the Proton acceptor in catalysis. Glutamate 77 contacts NADP(+). Residues asparagine 86 and aspartate 102 each coordinate shikimate. Residues glycine 126–alanine 130, asparagine 149–arginine 154, and methionine 213 each bind NADP(+). Residue tyrosine 215 coordinates shikimate. Residue glycine 237 coordinates NADP(+).

It belongs to the shikimate dehydrogenase family. Homodimer.

The enzyme catalyses shikimate + NADP(+) = 3-dehydroshikimate + NADPH + H(+). Its pathway is metabolic intermediate biosynthesis; chorismate biosynthesis; chorismate from D-erythrose 4-phosphate and phosphoenolpyruvate: step 4/7. Its function is as follows. Involved in the biosynthesis of the chorismate, which leads to the biosynthesis of aromatic amino acids. Catalyzes the reversible NADPH linked reduction of 3-dehydroshikimate (DHSA) to yield shikimate (SA). This Escherichia coli O127:H6 (strain E2348/69 / EPEC) protein is Shikimate dehydrogenase (NADP(+)).